A 443-amino-acid polypeptide reads, in one-letter code: Probable glycine dehydrogenase (decarboxylating) subunit 1 (443 aa).

The protein belongs to the GcvP family. N-terminal subunit subfamily. The glycine cleavage system is composed of four proteins: P, T, L and H. In this organism, the P 'protein' is a heterodimer of two subunits.

The catalysed reaction is N(6)-[(R)-lipoyl]-L-lysyl-[glycine-cleavage complex H protein] + glycine + H(+) = N(6)-[(R)-S(8)-aminomethyldihydrolipoyl]-L-lysyl-[glycine-cleavage complex H protein] + CO2. Its function is as follows. The glycine cleavage system catalyzes the degradation of glycine. The P protein binds the alpha-amino group of glycine through its pyridoxal phosphate cofactor; CO(2) is released and the remaining methylamine moiety is then transferred to the lipoamide cofactor of the H protein. This Chloroherpeton thalassium (strain ATCC 35110 / GB-78) protein is Probable glycine dehydrogenase (decarboxylating) subunit 1.